Reading from the N-terminus, the 345-residue chain is Platelet-derived growth factor C (345 aa).

Positions 1-22 (MSLFGLLLLTSALAGQRQGTQA) are cleaved as a signal peptide. N-linked (GlcNAc...) asparagine glycans are attached at residues Asn-25 and Asn-55. A CUB domain is found at 46 to 163 (HERIITVSTN…PGFCIHYNIV (118 aa)). Intrachain disulfides connect Cys-104–Cys-124, Cys-250–Cys-294, Cys-280–Cys-335, and Cys-287–Cys-337.

This sequence belongs to the PDGF/VEGF growth factor family. Homodimer; disulfide-linked. Interacts with PDGFRA homodimers, and with heterodimers formed by PDGFRA and PDGFRB. Interacts (via CUB domain) with PLAT (via kringle domain). In terms of processing, proteolytic removal of the N-terminal CUB domain releasing the core domain is necessary for unmasking the receptor-binding epitopes of the core domain. Cleavage after basic residues in the hinge region (region connecting the CUB and growth factor domains) gives rise to the receptor-binding form. Cleaved by PLAT and PLG. Post-translationally, sumoylated with SUMO1. N-glycosylated. Expressed in the fallopian tube, vascular smooth muscle cells in kidney, breast and colon and in visceral smooth muscle of the gastrointestinal tract. Highly expressed in retinal pigment epithelia. Expressed in medulloblastoma. In the kidney, constitutively expressed in parietal epithelial cells of Bowman's capsule, tubular epithelial cells and in arterial endothelial cells (at protein level). Highly expressed in the platelets, prostate, testis and uterus. Higher expression is observed in uterine leiomyomata. Weaker expression in the spleen, thymus, heart, pancreas, liver, ovary cells and small intestine, and negligible expression in the colon and peripheral blood leukocytes.

Its subcellular location is the cytoplasm. It localises to the cytosol. The protein localises to the secreted. It is found in the nucleus. The protein resides in the cytoplasmic granule. Its subcellular location is the cell membrane. In terms of biological role, growth factor that plays an essential role in the regulation of embryonic development, cell proliferation, cell migration, survival and chemotaxis. Potent mitogen and chemoattractant for cells of mesenchymal origin. Required for normal skeleton formation during embryonic development, especially for normal development of the craniofacial skeleton and for normal development of the palate. Required for normal skin morphogenesis during embryonic development. Plays an important role in wound healing, where it appears to be involved in three stages: inflammation, proliferation and remodeling. Plays an important role in angiogenesis and blood vessel development. Involved in fibrotic processes, in which transformation of interstitial fibroblasts into myofibroblasts plus collagen deposition occurs. The CUB domain has mitogenic activity in coronary artery smooth muscle cells, suggesting a role beyond the maintenance of the latency of the PDGF domain. In the nucleus, PDGFC seems to have additional function. The polypeptide is Platelet-derived growth factor C (PDGFC) (Homo sapiens (Human)).